A 129-amino-acid polypeptide reads, in one-letter code: Ropporin-1 (129 aa).

In terms of domain architecture, RIIa spans 11-34 (PELPELLKTQPPDLIQWAAEYFGA).

The protein belongs to the ropporin family. As to quaternary structure, homodimer. Interacts with AKAP3. May interact with SPA17. Interacts with RHPN1. Interacts with FSCB; the interaction increases upon spermatozoa capacitation conditions. Interacts with CFAP61. Sumoylated, sumoylation decreases upon spermatozoa capacitation conditions.

It localises to the cell projection. Its subcellular location is the cilium. The protein localises to the flagellum. Important for male fertility. With ROPN1L, involved in fibrous sheath integrity and sperm motility, plays a role in PKA-dependent signaling processes required for spermatozoa capacitation. This Mesocricetus auratus (Golden hamster) protein is Ropporin-1.